Reading from the N-terminus, the 276-residue chain is Tyrosinase (276 aa).

Residues His38, His56, His66, His193, His197, and His219 each coordinate Cu cation.

Belongs to the tyrosinase family. It depends on Cu(2+) as a cofactor.

It carries out the reaction 2 L-dopa + O2 = 2 L-dopaquinone + 2 H2O. The catalysed reaction is L-tyrosine + O2 = L-dopaquinone + H2O. In terms of biological role, this is a copper-containing oxidase that functions in the formation of pigments such as melanins and other polyphenolic compounds. This chain is Tyrosinase (melC2), found in Streptomyces galbus.